Reading from the N-terminus, the 168-residue chain is Crossover junction endodeoxyribonuclease RuvC (168 aa).

Active-site residues include Asp7, Glu67, and His139. Mg(2+) is bound by residues Asp7, Glu67, and His139.

It belongs to the RuvC family. In terms of assembly, homodimer which binds Holliday junction (HJ) DNA. The HJ becomes 2-fold symmetrical on binding to RuvC with unstacked arms; it has a different conformation from HJ DNA in complex with RuvA. In the full resolvosome a probable DNA-RuvA(4)-RuvB(12)-RuvC(2) complex forms which resolves the HJ. It depends on Mg(2+) as a cofactor.

The protein localises to the cytoplasm. The catalysed reaction is Endonucleolytic cleavage at a junction such as a reciprocal single-stranded crossover between two homologous DNA duplexes (Holliday junction).. Its function is as follows. The RuvA-RuvB-RuvC complex processes Holliday junction (HJ) DNA during genetic recombination and DNA repair. Endonuclease that resolves HJ intermediates. Cleaves cruciform DNA by making single-stranded nicks across the HJ at symmetrical positions within the homologous arms, yielding a 5'-phosphate and a 3'-hydroxyl group; requires a central core of homology in the junction. The consensus cleavage sequence is 5'-(A/T)TT(C/G)-3'. Cleavage occurs on the 3'-side of the TT dinucleotide at the point of strand exchange. HJ branch migration catalyzed by RuvA-RuvB allows RuvC to scan DNA until it finds its consensus sequence, where it cleaves and resolves the cruciform DNA. This is Crossover junction endodeoxyribonuclease RuvC from Deinococcus geothermalis (strain DSM 11300 / CIP 105573 / AG-3a).